Here is a 530-residue protein sequence, read N- to C-terminus: Autoinducer-2 kinase (530 aa).

Belongs to the FGGY kinase family.

Its subcellular location is the cytoplasm. The catalysed reaction is (S)-4,5-dihydroxypentane-2,3-dione + ATP = (2S)-2-hydroxy-3,4-dioxopentyl phosphate + ADP + H(+). In terms of biological role, catalyzes the phosphorylation of autoinducer-2 (AI-2) to phospho-AI-2, which subsequently inactivates the transcriptional regulator LsrR and leads to the transcription of the lsr operon. Phosphorylates the ring-open form of (S)-4,5-dihydroxypentane-2,3-dione (DPD), which is the precursor to all AI-2 signaling molecules, at the C5 position. This is Autoinducer-2 kinase from Yersinia pestis bv. Antiqua (strain Antiqua).